The following is a 152-amino-acid chain: D-erythrulose-4-phosphate isomerase 2 (152 aa).

Residue cysteine 70 is the Proton acceptor of the active site.

This sequence belongs to the LacAB/RpiB family.

The enzyme catalyses D-erythrulose 4-phosphate = D-erythrose 4-phosphate. It participates in carbohydrate metabolism; erythritol degradation. Its pathway is carbohydrate metabolism; D-threitol degradation. It functions in the pathway carbohydrate metabolism; L-threitol degradation. Catalyzes the isomerization of D-erythrulose-4P to D-erythrose-4P. Involved in the degradation pathways of L-threitol, D-threitol and erythritol, that allow M.smegmatis to grow on these compounds as the sole carbon source. The chain is D-erythrulose-4-phosphate isomerase 2 from Mycolicibacterium smegmatis (strain ATCC 700084 / mc(2)155) (Mycobacterium smegmatis).